A 215-amino-acid chain; its full sequence is Probable GTP-binding protein EngB (215 aa).

Residues 31–215 form the EngB-type G domain; it reads GPPEIAFAGR…RTAILQAVVQ (185 aa). GTP is bound by residues 39-46, 66-70, 93-96, 160-163, and 194-196; these read GRSNVGKS, GRTQE, DMPG, TKSD, and TSA. 2 residues coordinate Mg(2+): serine 46 and threonine 68.

The protein belongs to the TRAFAC class TrmE-Era-EngA-EngB-Septin-like GTPase superfamily. EngB GTPase family. The cofactor is Mg(2+).

Functionally, necessary for normal cell division and for the maintenance of normal septation. The protein is Probable GTP-binding protein EngB of Bartonella bacilliformis (strain ATCC 35685 / KC583 / Herrer 020/F12,63).